The sequence spans 180 residues: RNA polymerase sigma-E factor (180 aa).

The Polymerase core binding motif lies at 36 to 49 (DLLQTALARTYGRW). A DNA-binding region (H-T-H motif) is located at residues 130 to 149 (TEETAAALGMSAGTVKSTLH).

This sequence belongs to the sigma-70 factor family. ECF subfamily.

The protein localises to the cytoplasm. In terms of biological role, sigma factors are initiation factors that promote the attachment of RNA polymerase to specific initiation sites and are then released. This sigma factor is required for the synthesis of the antibiotic actinomycin. This chain is RNA polymerase sigma-E factor (sigE), found in Streptomyces antibioticus.